The primary structure comprises 153 residues: uncharacterized protein (153 aa).

The tract at residues 17 to 78 (IYIHTPHPHP…HTTLSNLSLN (62 aa)) is disordered. The segment covering 22–38 (PHPHPHPHPHTPTHTHP) has biased composition (basic residues).

This is an uncharacterized protein from Saccharomyces cerevisiae (strain ATCC 204508 / S288c) (Baker's yeast).